A 380-amino-acid chain; its full sequence is tRNA-specific 2-thiouridylase MnmA (380 aa).

ATP-binding positions include 9-16 (GVSGGVDS) and M35. Residues 94–96 (NPD) are interaction with target base in tRNA. C99 functions as the Nucleophile in the catalytic mechanism. A disulfide bond links C99 and C195. Position 123 (G123) interacts with ATP. Residues 145–147 (KDQ) are interaction with tRNA. Catalysis depends on C195, which acts as the Cysteine persulfide intermediate. Residues 308-309 (RY) form an interaction with tRNA region.

This sequence belongs to the MnmA/TRMU family.

The protein localises to the cytoplasm. The enzyme catalyses S-sulfanyl-L-cysteinyl-[protein] + uridine(34) in tRNA + AH2 + ATP = 2-thiouridine(34) in tRNA + L-cysteinyl-[protein] + A + AMP + diphosphate + H(+). Its function is as follows. Catalyzes the 2-thiolation of uridine at the wobble position (U34) of tRNA, leading to the formation of s(2)U34. The protein is tRNA-specific 2-thiouridylase MnmA of Stenotrophomonas maltophilia (strain K279a).